Consider the following 403-residue polypeptide: Alkaline protease 1 (403 aa).

An N-terminal signal peptide occupies residues 1 to 21 (MQSIKRTLLLLGAVLPAVLAG). The propeptide occupies 22 to 121 (PIFPHRRAPT…VEEDQVWHLF (100 aa)). Residues 36 to 120 (KYIVTFKSDV…AVEEDQVWHL (85 aa)) form the Inhibitor I9 domain. Positions 130–403 (PWGLGSISHK…PNLLAYNGNA (274 aa)) constitute a Peptidase S8 domain. Catalysis depends on charge relay system residues D162 and H193. N-linked (GlcNAc...) asparagine glycans are attached at residues N253 and N309. S349 functions as the Charge relay system in the catalytic mechanism.

Belongs to the peptidase S8 family.

The protein resides in the secreted. It catalyses the reaction Hydrolysis of proteins with broad specificity, and of Bz-Arg-OEt &gt; Ac-Tyr-OEt. Does not hydrolyze peptide amides.. In terms of biological role, secreted alkaline protease that allows assimilation of proteinaceous substrates. The protein is Alkaline protease 1 (alp1) of Aspergillus flavus.